A 565-amino-acid polypeptide reads, in one-letter code: DNA primase (565 aa).

Residues 37–61 (CPFHSETNPSFYVHPGLKIYHCFGC) form a CHC2-type zinc finger. Residues 248–329 (GFFVITEGYF…NVLVATPSPY (82 aa)) enclose the Toprim domain. Glu-254, Asp-298, and Asp-300 together coordinate Mg(2+).

This sequence belongs to the DnaG primase family. Monomer. Interacts with DnaB. It depends on Zn(2+) as a cofactor. Mg(2+) serves as cofactor.

The catalysed reaction is ssDNA + n NTP = ssDNA/pppN(pN)n-1 hybrid + (n-1) diphosphate.. Functionally, RNA polymerase that catalyzes the synthesis of short RNA molecules used as primers for DNA polymerase during DNA replication. This is DNA primase from Thermotoga maritima (strain ATCC 43589 / DSM 3109 / JCM 10099 / NBRC 100826 / MSB8).